The chain runs to 175 residues: Crossover junction endodeoxyribonuclease RuvC (175 aa).

Catalysis depends on residues D12, E72, and D144. Mg(2+) is bound by residues D12, E72, and D144.

Belongs to the RuvC family. In terms of assembly, homodimer which binds Holliday junction (HJ) DNA. The HJ becomes 2-fold symmetrical on binding to RuvC with unstacked arms; it has a different conformation from HJ DNA in complex with RuvA. In the full resolvosome a probable DNA-RuvA(4)-RuvB(12)-RuvC(2) complex forms which resolves the HJ. It depends on Mg(2+) as a cofactor.

The protein resides in the cytoplasm. The enzyme catalyses Endonucleolytic cleavage at a junction such as a reciprocal single-stranded crossover between two homologous DNA duplexes (Holliday junction).. In terms of biological role, the RuvA-RuvB-RuvC complex processes Holliday junction (HJ) DNA during genetic recombination and DNA repair. Endonuclease that resolves HJ intermediates. Cleaves cruciform DNA by making single-stranded nicks across the HJ at symmetrical positions within the homologous arms, yielding a 5'-phosphate and a 3'-hydroxyl group; requires a central core of homology in the junction. The consensus cleavage sequence is 5'-(A/T)TT(C/G)-3'. Cleavage occurs on the 3'-side of the TT dinucleotide at the point of strand exchange. HJ branch migration catalyzed by RuvA-RuvB allows RuvC to scan DNA until it finds its consensus sequence, where it cleaves and resolves the cruciform DNA. This Beijerinckia indica subsp. indica (strain ATCC 9039 / DSM 1715 / NCIMB 8712) protein is Crossover junction endodeoxyribonuclease RuvC.